Reading from the N-terminus, the 172-residue chain is MISGPPGSGKSTYAKRLAEDLGLSYYSTGTIFRSIARERGLSLAEMSRLAEEDPRIDLEIDRRTLDVASRGGVVIDSHLAAWLLRDKAQYLVLVKAPVWVRVRRIARRDGVPLRRALAETVEREWSQRLRFKRYYGIDVSDTTIFHLTVDTSMYSVEDTYRLILEGARRRGL.

4 to 12 is a binding site for ATP; the sequence is GPPGSGKST.

Belongs to the cytidylate kinase family. Type 2 subfamily.

It localises to the cytoplasm. The catalysed reaction is CMP + ATP = CDP + ADP. It carries out the reaction dCMP + ATP = dCDP + ADP. In Aeropyrum pernix (strain ATCC 700893 / DSM 11879 / JCM 9820 / NBRC 100138 / K1), this protein is Cytidylate kinase (cmk).